Here is a 326-residue protein sequence, read N- to C-terminus: Regulation of nuclear pre-mRNA domain-containing protein 1B (326 aa).

S2 bears the N-acetylserine mark. A CID domain is found at 2 to 133 (SSFSESALEK…QLKLSMEDSK (132 aa)). The interval 127-149 (LSMEDSKSPPPKATEEKKSLKRT) is disordered. A compositionally biased stretch (basic and acidic residues) spans 128-144 (SMEDSKSPPPKATEEKK). Phosphoserine is present on residues S132 and S134. Y161 is modified (phosphotyrosine). A phosphoserine mark is found at S166 and S299.

Belongs to the UPF0400 (RTT103) family. Homodimer. May form a heterodimer with RPRD1A. Associates with RPAP2. Associates with the RNA polymerase II complex. In terms of tissue distribution, preferentially expressed in a range of tumor tissues including colon, lung, liver, breast, prostate, stomach, uterine endometrium and cervical cancers with higher levels in tumors than in adjacent non-tumor tissue (at protein level).

It localises to the nucleus. Functionally, interacts with phosphorylated C-terminal heptapeptide repeat domain (CTD) of the largest RNA polymerase II subunit POLR2A, and participates in dephosphorylation of the CTD by RPAP2. Transcriptional regulator which enhances expression of CCND1. Promotes binding of RNA polymerase II to the CCDN1 promoter and to the termination region before the poly-A site but decreases its binding after the poly-A site. Prevents RNA polymerase II from reading through the 3' end termination site and may allow it to be recruited back to the promoter through promotion of the formation of a chromatin loop. Also enhances the transcription of a number of other cell cycle-related genes including CDK2, CDK4, CDK6 and cyclin-E but not CDKN1A, CDKN1B or cyclin-A. Promotes cell proliferation. This chain is Regulation of nuclear pre-mRNA domain-containing protein 1B (RPRD1B), found in Homo sapiens (Human).